Consider the following 131-residue polypeptide: Monothiol glutaredoxin-S6 (131 aa).

In terms of domain architecture, Glutaredoxin spans 31–131; the sequence is SAFVQNAIYS…KLLGNSQSQR (101 aa). Cys-51 contributes to the [2Fe-2S] cluster binding site.

This sequence belongs to the glutaredoxin family. CPYC subfamily.

It localises to the cytoplasm. Its function is as follows. May only reduce GSH-thiol disulfides, but not protein disulfides. This is Monothiol glutaredoxin-S6 (GRXS6) from Oryza sativa subsp. japonica (Rice).